A 238-amino-acid chain; its full sequence is ATP synthase subunit a (238 aa).

5 helical membrane-spanning segments follow: residues 18-38 (MSTV…TFIG), 76-96 (FIVL…LGLP), 117-137 (VLTL…GIKI), 195-215 (LIGM…GLFI), and 216-236 (GAIQ…HKVE).

Belongs to the ATPase A chain family. As to quaternary structure, F-type ATPases have 2 components, CF(1) - the catalytic core - and CF(0) - the membrane proton channel. CF(1) has five subunits: alpha(3), beta(3), gamma(1), delta(1), epsilon(1). CF(0) has three main subunits: a(1), b(2) and c(9-12). The alpha and beta chains form an alternating ring which encloses part of the gamma chain. CF(1) is attached to CF(0) by a central stalk formed by the gamma and epsilon chains, while a peripheral stalk is formed by the delta and b chains.

Its subcellular location is the cell membrane. Functionally, key component of the proton channel; it plays a direct role in the translocation of protons across the membrane. The polypeptide is ATP synthase subunit a (Alkalihalophilus pseudofirmus (strain ATCC BAA-2126 / JCM 17055 / OF4) (Bacillus pseudofirmus)).